A 357-amino-acid polypeptide reads, in one-letter code: Protein Wnt-8c (357 aa).

An N-terminal signal peptide occupies residues M1–G16. A disulfide bridge links C55 with C66. N-linked (GlcNAc...) asparagine glycosylation is present at N104. Cystine bridges form between C105–C113, C115–C133, C181–C195, C183–C190, C260–C298, C276–C291, C313–C328, C315–C325, and C320–C321. The O-palmitoleoyl serine moiety is linked to residue S187. 2 N-linked (GlcNAc...) asparagine glycosylation sites follow: N263 and N282. N346 carries N-linked (GlcNAc...) asparagine glycosylation.

It belongs to the Wnt family. Post-translationally, palmitoleoylation is required for efficient binding to frizzled receptors. Depalmitoleoylation leads to Wnt signaling pathway inhibition. Proteolytic processing by tiki1 and tiki2 promotes oxidation and formation of large disulfide-bond oligomers, leading to inactivation of wnt8c. In terms of tissue distribution, cells that form rhombomere 4. Hensen node and the neural plate immediately anterior to it.

The protein resides in the secreted. It is found in the extracellular space. Its subcellular location is the extracellular matrix. Functionally, ligand for members of the frizzled family of seven transmembrane receptors. Probable developmental protein. Is likely to signal over only few cell diameters. May be involved in the regulation of axis formation and in the rhombomere specification. In Gallus gallus (Chicken), this protein is Protein Wnt-8c (WNT8C).